A 295-amino-acid polypeptide reads, in one-letter code: Glycine--tRNA ligase alpha subunit (295 aa).

This sequence belongs to the class-II aminoacyl-tRNA synthetase family. As to quaternary structure, tetramer of two alpha and two beta subunits.

The protein localises to the cytoplasm. It catalyses the reaction tRNA(Gly) + glycine + ATP = glycyl-tRNA(Gly) + AMP + diphosphate. The protein is Glycine--tRNA ligase alpha subunit of Thermosynechococcus vestitus (strain NIES-2133 / IAM M-273 / BP-1).